A 730-amino-acid chain; its full sequence is Elongation factor 2 (730 aa).

Residues 19 to 260 (EKIRNIGIVA…MVIRFLPNPL (242 aa)) enclose the tr-type G domain. GTP-binding positions include 28-35 (AHIDHGKT), 94-98 (DTPGH), and 148-151 (NKVD). Position 596 is a diphthamide (histidine 596).

This sequence belongs to the TRAFAC class translation factor GTPase superfamily. Classic translation factor GTPase family. EF-G/EF-2 subfamily.

It localises to the cytoplasm. Catalyzes the GTP-dependent ribosomal translocation step during translation elongation. During this step, the ribosome changes from the pre-translocational (PRE) to the post-translocational (POST) state as the newly formed A-site-bound peptidyl-tRNA and P-site-bound deacylated tRNA move to the P and E sites, respectively. Catalyzes the coordinated movement of the two tRNA molecules, the mRNA and conformational changes in the ribosome. This is Elongation factor 2 (fusA) from Methanosarcina thermophila.